Here is a 551-residue protein sequence, read N- to C-terminus: Inosine-5'-monophosphate dehydrogenase (551 aa).

2 CBS domains span residues 102–163 (FILD…PLSE) and 165–221 (MTSD…PLAS). Residues 258–260 (DSS) and 308–310 (GMG) each bind NAD(+). Positions 310 and 312 each coordinate K(+). Ser313 contributes to the IMP binding site. Cys315 contributes to the K(+) binding site. Cys315 (thioimidate intermediate) is an active-site residue. Residues 349 to 351 (DGG), 372 to 373 (GS), and 396 to 400 (YRGMG) contribute to the IMP site. Positions 407 to 462 (AGTRRTASPPARGLRSPEASPSTAASSGGASRASALSEASPSAKSEASRTSTSTGS) are disordered. Over residues 422-462 (SPEASPSTAASSGGASRASALSEASPSAKSEASRTSTSTGS) the composition is skewed to low complexity. The active-site Proton acceptor is Arg465. Residue Gln477 coordinates IMP. Glu536 and Gly537 together coordinate K(+).

Belongs to the IMPDH/GMPR family. As to quaternary structure, homotetramer. Requires K(+) as cofactor.

Its subcellular location is the cytoplasm. The catalysed reaction is IMP + NAD(+) + H2O = XMP + NADH + H(+). It participates in purine metabolism; XMP biosynthesis via de novo pathway; XMP from IMP: step 1/1. With respect to regulation, mycophenolic acid (MPA) is a non-competitive inhibitor that prevents formation of the closed enzyme conformation by binding to the same site as the amobile flap. In contrast, mizoribine monophosphate (MZP) is a competitive inhibitor that induces the closed conformation. MPA is a potent inhibitor of mammalian IMPDHs but a poor inhibitor of the bacterial enzymes. MZP is a more potent inhibitor of bacterial IMPDH. Potently inhibited by MPA and adenine dinucleotide analogs such as thiazole-4-carboxamide adenine dinucleotide (TAD). Functionally, catalyzes the conversion of inosine 5'-phosphate (IMP) to xanthosine 5'-phosphate (XMP), the first committed and rate-limiting step in the de novo synthesis of guanine nucleotides, and therefore plays an important role in the regulation of cell growth. This chain is Inosine-5'-monophosphate dehydrogenase, found in Toxoplasma gondii.